Reading from the N-terminus, the 397-residue chain is Protein Mx1 (397 aa).

This sequence belongs to the TRAFAC class dynamin-like GTPase superfamily. Dynamin/Fzo/YdjA family.

This chain is Protein Mx1 (Mx1), found in Mus musculus (Mouse).